The primary structure comprises 182 residues: Mitochondrial FAD-linked sulfhydryl oxidase erv1 (182 aa).

Residues 75–177 (RLPDVAELGR…FNCQVWSKKA (103 aa)) enclose the ERV/ALR sulfhydryl oxidase domain. Residues 81–87 (ELGRSTW), His-91, and Tyr-120 contribute to the FAD site. 2 cysteine pairs are disulfide-bonded: Cys-122/Cys-125 and Cys-153/Cys-170. FAD contacts are provided by residues 153 to 165 (CEAH…RLGK) and 176 to 177 (KA).

FAD is required as a cofactor.

Its subcellular location is the mitochondrion intermembrane space. It carries out the reaction 2 R'C(R)SH + O2 = R'C(R)S-S(R)CR' + H2O2. FAD-dependent sulfhydryl oxidase that catalyzes disulfide bond formation. Required for the import and folding of small cysteine-containing proteins in the mitochondrial intermembrane space (IMS). In Schizosaccharomyces pombe (strain 972 / ATCC 24843) (Fission yeast), this protein is Mitochondrial FAD-linked sulfhydryl oxidase erv1 (erv1).